The primary structure comprises 53 residues: Ovomucoid (53 aa).

The 51-residue stretch at 3–53 (VDCSEYPKPGCMMERLPLCGSDNKTYNDKCNFCNAVVESNGTLTLNHFGEC) folds into the Kazal-like domain. 3 cysteine pairs are disulfide-bonded: Cys-5–Cys-35, Cys-13–Cys-32, and Cys-21–Cys-53. The N-linked (GlcNAc...) asparagine glycan is linked to Asn-42.

Its subcellular location is the secreted. The chain is Ovomucoid from Turnix sylvaticus (Common buttonquail).